Consider the following 3021-residue polypeptide: Genome polyprotein (3021 aa).

N-acetylserine; by host is present on Ser-2. The interval 2-23 (STLPKPQRKTKRNTIRRPQDVK) is interaction with STAT1. The interaction with EIF2AK2/PKR stretch occupies residues 2–58 (STLPKPQRKTKRNTIRRPQDVKFPGGGVIYVGVYVLPRRGPRLGVRATRKTSERSQP). An interaction with DDX3X region spans residues 2-59 (STLPKPQRKTKRNTIRRPQDVKFPGGGVIYVGVYVLPRRGPRLGVRATRKTSERSQPR). The disordered stretch occupies residues 2–75 (STLPKPQRKT…PKARRSEGRS (74 aa)). Topologically, residues 2–168 (STLPKPQRKT…EDGINFATGN (167 aa)) are cytoplasmic. Short sequence motifs (nuclear localization signal) lie at residues 5 to 13 (PKPQRKTKR) and 38 to 43 (PRRGPR). Residues 7–16 (PQRKTKRNTI) are compositionally biased toward basic residues. A Phosphoserine; by host modification is found at Ser-53. 2 consecutive short sequence motifs (nuclear localization signal) follow at residues 58 to 64 (PRGRRKP) and 66 to 71 (PKARRS). A compositionally biased stretch (basic residues) spans 58–68 (PRGRRKPIPKA). 2 positions are modified to phosphoserine; by host: Ser-99 and Ser-116. The interval 112–152 (PRRRSRNLGKVIDTLTCGFADLMGYIPLVGAPLGGAARALA) is important for endoplasmic reticulum and mitochondrial localization. Positions 122–173 (VIDTLTCGFADLMGYIPLVGAPLGGAARALAHGVRALEDGINFATGNLPGCS) are interaction with APOA2. The interval 164 to 167 (FATG) is important for lipid droplets localization. A helical transmembrane segment spans residues 169 to 189 (LPGCSFSIFLLALFSCLIHPA). The propeptide at 178-191 (LLALFSCLIHPAAS) is ER anchor for the core protein, removed in mature form by host signal peptidase. Residues 190-358 (ASLEWRNTSG…AGAHWGIIAG (169 aa)) are Lumenal-facing. Residues Asn-196, Asn-209, and Asn-234 are each glycosylated (N-linked (GlcNAc...) asparagine; by host). Residues 265–296 (LVGAGTMCSALYVGDMCGPVFLVGQAFTFRPR) are important for fusion. Residue Asn-305 is glycosylated (N-linked (GlcNAc...) asparagine; by host). A helical membrane pass occupies residues 359-379 (LAYYSMQGNWAKVAIIMVMFS). Residues 380-731 (GVDASTHVTA…WEFVILIFLL (352 aa)) are Lumenal-facing. The segment at 385-412 (THVTAGQAARNAYGITSLFSVGAKQNLQ) is HVR1. N-linked (GlcNAc...) (high mannose) asparagine; by host glycosylation is found at Asn-417, Asn-423, and Asn-430. 4 disulfides stabilise this stretch: Cys-429–Cys-553, Cys-452–Cys-459, Cys-487–Cys-495, and Cys-504–Cys-509. Asn-448 carries N-linked (GlcNAc...) asparagine; by host glycosylation. Residues 475 to 479 (ANITG) form an HVR2 region. Asn-476 is a glycosylation site (N-linked (GlcNAc...) asparagine; by host). The interval 481–494 (SDDKPYCWHYAPRP) is CD81-binding 1. The N-linked (GlcNAc...) asparagine; by host glycan is linked to Asn-533. Residues 545–552 (PPSGRWFG) form a CD81-binding 2 region. Asn-557 carries an N-linked (GlcNAc...) asparagine; by host glycan. 4 disulfide bridges follow: Cys-565-Cys-570, Cys-587-Cys-591, Cys-603-Cys-626, and Cys-613-Cys-650. 2 N-linked (GlcNAc...) (high mannose) asparagine; by host glycosylation sites follow: Asn-629 and Asn-651. The cysteines at positions 658 and 683 are disulfide-linked. Residues 666 to 677 (SEQHPLLHSTTE) are PKR/eIF2-alpha phosphorylation homology domain (PePHD). The helical transmembrane segment at 732-752 (LADARVCVALWLILTISQAEA) threads the bilayer. The Lumenal portion of the chain corresponds to 753–763 (ALENLVTLNAV). The chain crosses the membrane as a helical span at residues 764–784 (AAAGTHGIGWYLVAFCAAWYV). Over 785-787 (RGK) the chain is Cytoplasmic. Residues 788–809 (LVPLVTYSLTGLWSLALLVLLL) form a helical membrane-spanning segment. At 810-819 (PQRAYAWSGE) the chain is on the lumenal side. A helical membrane pass occupies residues 820–840 (DSATLGAGILVLFGFFTLSPW). Residues 841 to 844 (YKHW) are Cytoplasmic-facing. The chain crosses the membrane as a helical span at residues 845 to 864 (IARLIWWNQYTICRCESALH). The Lumenal portion of the chain corresponds to 865–887 (VWVPPLLARGGRDGVILLTSLLY). The helical transmembrane segment at 888–908 (PSLIFDITKLLIAALGPLYLI) threads the bilayer. The Peptidase C18 domain maps to 905 to 1032 (LYLIQATITA…DYREMGWRLL (128 aa)). The Cytoplasmic segment spans residues 909–1663 (QATITATPYF…CMSADLEVTT (755 aa)). The protease NS2-3 stretch occupies residues 910 to 1212 (ATITATPYFV…PVETLSTQAR (303 aa)). The S-palmitoyl cysteine; by host moiety is linked to residue Cys-928. Residues 935–955 (MGGKYFQMIILSLADGSNTYL) form an interaction with host SCPS1 region. Residues His-958, Glu-978, and Cys-999 each act as for protease NS2 activity; shared with dimeric partner in the active site. The 182-residue stretch at 1033 to 1214 (APITAYAQQT…ETLSTQARSP (182 aa)) folds into the Peptidase S29 domain. Active-site charge relay system; for serine protease NS3 activity residues include His-1089 and Asp-1113. Zn(2+)-binding residues include Cys-1129 and Cys-1131. Ser-1171 serves as the catalytic Charge relay system; for serine protease NS3 activity. Zn(2+)-binding residues include Cys-1177 and His-1181. A Helicase ATP-binding domain is found at 1223–1375 (PAVPQSYQVG…SNIEEVALGS (153 aa)). 1236 to 1243 (APTGSGKS) lines the ATP pocket. Position 1243 (Ser-1243) interacts with Mg(2+). A DECH box motif is present at residues 1322–1325 (DDCH). One can recognise a Helicase C-terminal domain in the interval 1382–1544 (YGKAIPIACI…DLQPAETTVR (163 aa)). Positions 1492–1504 (QRRGRTGRGRLGT) are RNA-binding. A helical transmembrane segment spans residues 1664–1684 (STWVLLGGVLAAVAAYCLSVG). The interval 1685 to 1696 (CVVIVGHIELGG) is NS3-binding. Over 1685–1811 (CVVIVGHIEL…SVTSPLTTNQ (127 aa)) the chain is Cytoplasmic. Residues 1812 to 1830 (TMFFNILGGWVATHLAGPQ) form a helical membrane-spanning segment. Over 1831 to 1834 (ASSA) the chain is Lumenal. The chain crosses the membrane as a helical span at residues 1835-1855 (FVVSGLAGAAIGGIGLGRVLL). Residue Asp-1856 is a topological domain, cytoplasmic. Residues 1857-1877 (ILAGYGAGVSGALVAFKIMGG) traverse the membrane as a helical segment. Over 1878–1887 (EPPTTEDMVN) the chain is Lumenal. A helical membrane pass occupies residues 1888-1908 (LLPAILSPGALVVGVICAAIL). Residues 1909–1978 (RRHVGPGEGP…WINEDYPSPC (70 aa)) are Cytoplasmic-facing. Cys-1978 carries the S-palmitoyl cysteine; by host lipid modification. An intramembrane segment occupies 1979-2008 (SGDWLRIIWDWVCSVVSDFKTWLSAKIMPA). Residues 2009-3000 (LPGLPFISCQ…YHSVSRARTR (992 aa)) lie on the Cytoplasmic side of the membrane. Positions 2017, 2035, 2037, and 2058 each coordinate Zn(2+). An FKBP8-binding region spans residues 2126–2214 (EFFTEVDGVR…ASSSASQLSA (89 aa)). Residues 2126-2338 (EFFTEVDGVR…PVPPPRRKRT (213 aa)) are transcriptional activation. The interaction with non-structural protein 4A stretch occupies residues 2141–2145 (PPCRP). A disordered region spans residues 2193–2215 (ARRLARGSPPSEASSSASQLSAP). Residues 2195 to 2448 (RLARGSPPSE…ALITPCSAEE (254 aa)) are interaction with host SKP2. Phosphoserine; by host occurs at positions 2200, 2203, 2207, 2210, 2213, and 2216. Residues 2200–2215 (SPPSEASSSASQLSAP) are compositionally biased toward low complexity. The tract at residues 2216 to 2255 (SLKATCQTHRPHPDAELVDANLLWRQEMGSNITRVESETK) is ISDR. Residues 2216–2281 (SLKATCQTHR…AELSAAAECF (66 aa)) are interaction with EIF2AK2/PKR. The segment at 2255 to 2312 (KVVILDSFEPLRAETDDAELSAAAECFKKPPKYPPALPIWARPDYNPPLLDRWKSPDY) is NS4B-binding. The V3 stretch occupies residues 2305 to 2383 (DRWKSPDYVP…DTQSSTASKV (79 aa)). 2 disordered regions span residues 2318–2338 (HGCALPPKGAPPVPPPRRKRT) and 2356–2419 (KSFP…WSTV). Residues 2328–2331 (PPVP) carry the SH3-binding motif. Positions 2333 to 2341 (PRRKRTIQL) match the Nuclear localization signal motif. Lys-2356 participates in a covalent cross-link: Glycyl lysine isopeptide (Lys-Gly) (interchain with G-Cter in ubiquitin). Residues 2359 to 2381 (PSSKPQEENSSSSGVDTQSSTAS) are compositionally biased toward low complexity. 2 positions are modified to phosphoserine; by host: Ser-2459 and Ser-2472. A RdRp catalytic domain is found at 2644 to 2762 (PLGFSYDTRC…VAESDGVDED (119 aa)). Residues Asp-2650, Asp-2748, and Asp-2749 each coordinate Mg(2+). Residues 3001–3021 (YLLLCLLLLTVGVGIFLLPAR) traverse the membrane as a helical segment.

Belongs to the hepacivirus polyprotein family. Homooligomer. Interacts with E1 (via C-terminus). Interacts with the non-structural protein 5A. Interacts (via N-terminus) with host STAT1 (via SH2 domain); this interaction results in decreased STAT1 phosphorylation and ubiquitin-mediated proteasome-dependent STAT1 degradation, leading to decreased IFN-stimulated gene transcription. Interacts with host STAT3; this interaction constitutively activates STAT3. Interacts with host LTBR receptor. Interacts with host TNFRSF1A receptor and possibly induces apoptosis. Interacts with host HNRPK. Interacts with host YWHAE. Interacts with host UBE3A/E6AP. Interacts with host DDX3X. Interacts with host APOA2. Interacts with host RXRA protein. Interacts with host SP110 isoform 3/Sp110b; this interaction sequesters the transcriptional corepressor SP110 away from the nucleus. Interacts with host CREB3 nuclear transcription protein; this interaction triggers cell transformation. Interacts with host ACY3. Interacts with host C1QR1. Interacts with host RBM24; this interaction, which enhances the interaction of the mature core protein with 5'-UTR, may inhibit viral translation and favor replication. Interacts with host EIF2AK2/PKR; this interaction induces the autophosphorylation of EIF2AK2. Part of the viral assembly initiation complex composed of NS2, E1, E2, NS3, NS4A, NS5A and the mature core protein. As to quaternary structure, forms a heterodimer with envelope glycoprotein E2. Interacts with mature core protein. Interacts with protease NS2. The heterodimer E1/E2 interacts with host CLDN1; this interaction plays a role in viral entry into host cell. Interacts with host SPSB2 (via C-terminus). Part of the viral assembly initiation complex composed of NS2, E1, E2, NS3, NS4A, NS5A and the mature core protein. Interacts with host NEURL3; this interaction prevents E1 binding to glycoprotein E2. In terms of assembly, forms a heterodimer with envelope glycoprotein E1. Interacts with host CD81 and SCARB1 receptors; these interactions play a role in viral entry into host cell. Interacts with host EIF2AK2/PKR; this interaction inhibits EIF2AK2 and probably allows the virus to evade the innate immune response. Interacts with host CD209/DC-SIGN and CLEC4M/DC-SIGNR. Interact with host SPCS1; this interaction is essential for viral particle assembly. Interacts with protease NS2. The heterodimer E1/E2 interacts with host CLDN1; this interaction plays a role in viral entry into host cell. Part of the viral assembly initiation complex composed of NS2, E1, E2, NS3, NS4A, NS5A and the mature core protein. Interacts with host SLC3A2/4F2hc; the interaction may facilitate viral entry into host cell. Interacts with human PLSCR1. Homohexamer. Homoheptamer. Interacts with protease NS2. As to quaternary structure, homodimer. Interacts with host SPCS1; this interaction is essential for viral particle assembly. Interacts with envelope glycoprotein E1. Interacts with envelope glycoprotein E2. Interacts with viroporin p7. Interacts with serine protease/helicase NS3. Part of the replication complex composed of NS2, NS3, NS4A, NS4B, NS5A and the RNA-directed RNA polymerase embedded in an ER-derived membranous web. Part of the viral assembly initiation complex composed of NS2, E1, E2, NS3, NS4A, NS5A and the mature core protein. In terms of assembly, interacts with protease NS2. Interacts with non-structural protein 4A; this interaction stabilizes the folding of NS3 serine protease. NS3-NS4A interaction is essential for NS3 activation and allows membrane anchorage of the latter. NS3/NS4A complex also prevents phosphorylation of host IRF3, thus preventing the establishment of dsRNA induced antiviral state. Interacts with host MAVS; this interaction leads to the cleavage and inhibition of host MAVS. Interacts with host TICAM1; this interaction leads to the cleavage and inhibition of host TICAM1. Interacts with host TANK-binding kinase/TBK1; this interaction results in the inhibition of the association between TBK1 and IRF3, which leads to the inhibition of IRF3 activation. Interacts with host RBM24. Part of the replication complex composed of NS2, NS3, NS4A, NS4B, NS5A and the RNA-directed RNA polymerase embedded in an ER-derived membranous web. Part of the viral assembly initiation complex composed of NS2, E1, E2, NS3, NS4A, NS5A and the mature core protein. Interacts with NS3 serine protease; this interaction stabilizes the folding of NS3 serine protease. NS3-NS4A interaction is essential for NS3 activation and allows membrane anchorage of the latter. Interacts with non-structural protein 5A (via N-terminus). Part of the replication complex composed of NS2, NS3, NS4A, NS4B, NS5A and the RNA-directed RNA polymerase embedded in an ER-derived membranous web. Part of the viral assembly initiation complex composed of NS2, E1, E2, NS3, NS4A, NS5A and the mature core protein. As to quaternary structure, homomultimer. Interacts with non-structural protein NS5A. Interacts with host PLA2G4C; this interaction likely initiates the recruitment of replication complexes to lipid droplets. Interacts with host STING; this interaction disrupts the interaction between STING and TBK1 thereby suppressing the interferon signaling. Part of the replication complex composed of NS2, NS3, NS4A, NS4B, NS5A and the RNA-directed RNA polymerase embedded in an ER-derived membranous web. In terms of assembly, monomer. Homodimer; dimerization is required for RNA-binding. Interacts with the mature core protein. Interacts (via N-terminus) with non-structural protein 4A. Interacts with non-structural protein 4B. Interacts (via region D2) with RNA-directed RNA polymerase. Part of the viral assembly initiation complex composed of NS2, E1, E2, NS3, NS4A, NS5A and the mature core protein. Part of the replication complex composed of NS2, NS3, NS4A, NS4B, NS5A and the RNA-directed RNA polymerase embedded in an ER-derived membranous web. Interacts with host GRB2. Interacts with host BIN1. Interacts with host PIK3R1. Interacts with host SRCAP. Interacts with host FKBP8. Interacts (via C-terminus) with host VAPB (via MSP domain). Interacts with host EIF2AK2/PKR; this interaction leads to disruption of EIF2AK2 dimerization by NS5A and probably allows the virus to evade the innate immune response. Interacts (via N-terminus) with host PACSIN2 (via N-terminus); this interaction attenuates protein kinase C alpha-mediated phosphorylation of PACSIN2 by disrupting the interaction between PACSIN2 and PRKCA. Interacts (via N-terminus) with host SRC kinase (via SH2 domain). Interacts with most Src-family kinases. Interacts with host IFI27 and SKP2; promotes the ubiquitin-mediated proteasomal degradation of NS5A. Interacts with host GPS2. Interacts with host TNFRSF21; this interaction allows the modulation by the virus of JNK, p38 MAPK, STAT3, and Akt signaling pathways in a DR6-dependent manner. Interacts (via N-terminus) with host CIDEB (via N-terminus); this interaction seems to regulate the association of HCV particles with APOE. Interacts with host CHKA/Choline Kinase-alpha; CHKA bridges host PI4KA and NS5A and potentiates NS5A-stimulated PI4KA activity, which then facilitates the targeting of the ternary complex to the ER for viral replication. Interacts with host SPSB2 (via C-terminus); this interaction targets NS5A for ubiquitination and degradation. Interacts with host RAB18; this interaction may promote the association of NS5A and other replicase components with lipid droplets. Interacts (via region D2) with host PPIA/CYPA; the interaction stimulates RNA-binding ability of NS5A and is dependent on the peptidyl-prolyl cis-trans isomerase activity of PPIA/CYPA. Interacts with host TRIM14; this interaction induces the degradation of NS5A. Homooligomer. Interacts with non-structural protein 5A. Interacts with host VAPB. Interacts with host PRK2/PKN2. Interacts with host HNRNPA1 and SEPT6; these interactions facilitate viral replication. Part of the replication complex composed of NS2, NS3, NS4A, NS4B, NS5A and the RNA-directed RNA polymerase. Zn(2+) is required as a cofactor. The cofactor is Mg(2+). In terms of processing, specific enzymatic cleavages in vivo yield mature proteins. The structural proteins, core, E1, E2 and p7 are produced by proteolytic processing by host signal peptidases. The core protein precursor is synthesized as a 23 kDa, which is retained in the ER membrane through the hydrophobic signal peptide. Cleavage by the signal peptidase releases the 21 kDa mature core protein. The cleavage of the core protein precursor occurs between aminoacids 176 and 188 but the exact cleavage site is not known. Some degraded forms of the core protein appear as well during the course of infection. The other proteins (p7, NS2, NS3, NS4A, NS4B, NS5A and NS5B) are cleaved by the viral proteases. Autoprocessing between NS2 and NS3 is mediated by the NS2 cysteine protease catalytic domain and regulated by the NS3 N-terminal domain. Phosphorylated by host PKC and PKA. Post-translationally, ubiquitinated; mediated by UBE3A and leading to core protein subsequent proteasomal degradation. In terms of processing, highly N-glycosylated. Palmitoylation is required for NS2/3 autoprocessing and E2 recruitment to membranes. Post-translationally, palmitoylated. This modification may play a role in its polymerization or in protein-protein interactions. In terms of processing, phosphorylated on serines in a basal form termed p56. p58 is a hyperphosphorylated form of p56. p56 and p58 coexist in the cell in roughly equivalent amounts. Hyperphosphorylation is dependent on the presence of NS4A. Host CSNK1A1/CKI-alpha or RPS6KB1 kinases may be responsible for NS5A phosphorylation. Tyrosine phosphorylation is essential for the interaction with host SRC. Post-translationally, ubiquitinated. Ubiquitination, most probably at Lys-2356, mediated by host IFI27 and SKP2 leads to proteasomal degradation, restricting viral infection. Ubiquitination by host TRIM22 leads to interruption of viral replication. In terms of processing, the N-terminus is phosphorylated by host PRK2/PKN2.

The protein resides in the host endoplasmic reticulum membrane. It is found in the host mitochondrion membrane. It localises to the virion. The protein localises to the host cytoplasm. Its subcellular location is the host nucleus. The protein resides in the host lipid droplet. It is found in the virion membrane. It localises to the host mitochondrion. The protein localises to the host cell membrane. Its subcellular location is the host perinuclear region. It carries out the reaction Hydrolysis of four peptide bonds in the viral precursor polyprotein, commonly with Asp or Glu in the P6 position, Cys or Thr in P1 and Ser or Ala in P1'.. The enzyme catalyses a ribonucleoside 5'-triphosphate + H2O = a ribonucleoside 5'-diphosphate + phosphate + H(+). The catalysed reaction is ATP + H2O = ADP + phosphate + H(+). It catalyses the reaction RNA(n) + a ribonucleoside 5'-triphosphate = RNA(n+1) + diphosphate. Inhibited by the antiviral drug hexamethylene amiloride. Inhibition by amantadine appears to be genotype-dependent. Also inhibited by long-alkyl-chain iminosugar derivatives. Its activity is regulated as follows. Activity is up-regulated by PRK2/PKN2-mediated phosphorylation. Functionally, packages viral RNA to form a viral nucleocapsid, and promotes virion budding. Participates in the viral particle production as a result of its interaction with the non-structural protein 5A. Binds RNA and may function as a RNA chaperone to induce the RNA structural rearrangements taking place during virus replication. Modulates viral translation initiation by interacting with viral IRES and 40S ribosomal subunit. Affects various cell signaling pathways, host immunity and lipid metabolism. Prevents the establishment of cellular antiviral state by blocking the interferon-alpha/beta (IFN-alpha/beta) and IFN-gamma signaling pathways and by blocking the formation of phosphorylated STAT1 and promoting ubiquitin-mediated proteasome-dependent degradation of STAT1. Activates STAT3 leading to cellular transformation. Regulates the activity of cellular genes, including c-myc and c-fos. May repress the promoter of p53, and sequester CREB3 and SP110 isoform 3/Sp110b in the cytoplasm. Represses cell cycle negative regulating factor CDKN1A, thereby interrupting an important check point of normal cell cycle regulation. Targets transcription factors involved in the regulation of inflammatory responses and in the immune response: suppresses TNF-induced NF-kappa-B activation, and activates AP-1. Binds to dendritic cells (DCs) via C1QR1, resulting in down-regulation of T-lymphocytes proliferation. Alters lipid metabolism by interacting with hepatocellular proteins involved in lipid accumulation and storage. Induces up-regulation of FAS promoter activity, and thereby contributes to the increased triglyceride accumulation in hepatocytes (steatosis). Its function is as follows. Forms a heterodimer with envelope glycoprotein E2, which mediates virus attachment to the host cell, virion internalization through clathrin-dependent endocytosis and fusion with host membrane. Fusion with the host cell is most likely mediated by both E1 and E2, through conformational rearrangements of the heterodimer required for fusion rather than a classical class II fusion mechanism. E1/E2 heterodimer binds host apolipoproteins such as APOB and ApoE thereby forming a lipo-viro-particle (LVP). APOE associated to the LVP allows the initial virus attachment to cell surface receptors such as the heparan sulfate proteoglycans (HSPGs), syndecan-1 (SDC1), syndecan-1 (SDC2), the low-density lipoprotein receptor (LDLR) and scavenger receptor class B type I (SCARB1). The cholesterol transfer activity of SCARB1 allows E2 exposure and binding of E2 to SCARB1 and the tetraspanin CD81. E1/E2 heterodimer binding on CD81 activates the epithelial growth factor receptor (EGFR) signaling pathway. Diffusion of the complex E1-E2-EGFR-SCARB1-CD81 to the cell lateral membrane allows further interaction with Claudin 1 (CLDN1) and occludin (OCLN) to finally trigger HCV entry. In terms of biological role, forms a heterodimer with envelope glycoprotein E1, which mediates virus attachment to the host cell, virion internalization through clathrin-dependent endocytosis and fusion with host membrane. Fusion with the host cell is most likely mediated by both E1 and E2, through conformational rearrangements of the heterodimer required for fusion rather than a classical class II fusion mechanism. The interaction between envelope glycoprotein E2 and host apolipoprotein E/APOE allows the proper assembly, maturation and infectivity of the viral particles. This interaction is probably promoted via the up-regulation of cellular autophagy by the virus. E1/E2 heterodimer binds host apolipoproteins such as APOB and APOE thereby forming a lipo-viro-particle (LVP). APOE associated to the LVP allows the initial virus attachment to cell surface receptors such as the heparan sulfate proteoglycans (HSPGs), syndecan-1 (SDC1), syndecan-1 (SDC2), the low-density lipoprotein receptor (LDLR) and scavenger receptor class B type I (SCARB1). The cholesterol transfer activity of SCARB1 allows E2 exposure and binding of E2 to SCARB1 and the tetraspanin CD81. E1/E2 heterodimer binding on CD81 activates the epithelial growth factor receptor (EGFR) signaling pathway. Diffusion of the complex E1-E2-EGFR-SCARB1-CD81 to the cell lateral membrane allows further interaction with Claudin 1 (CLDN1) and occludin (OCLN) to finally trigger HCV entry. Inhibits host EIF2AK2/PKR activation, preventing the establishment of an antiviral state. Viral ligand for CD209/DC-SIGN and CLEC4M/DC-SIGNR, which are respectively found on dendritic cells (DCs), and on liver sinusoidal endothelial cells and macrophage-like cells of lymph node sinuses. These interactions allow the capture of circulating HCV particles by these cells and subsequent facilitated transmission to permissive cells such as hepatocytes and lymphocyte subpopulations. The interaction between E2 and host amino acid transporter complex formed by SLC3A2 and SLC7A5/LAT1 may facilitate viral entry into host cell. Ion channel protein that acts as a viroporin and plays an essential role in the assembly, envelopment and secretion of viral particles. Regulates the host cell secretory pathway, which induces the intracellular retention of viral glycoproteins and favors assembly of viral particles. Creates a pore in acidic organelles and releases Ca(2+) and H(+) in the cytoplasm of infected cells, leading to a productive viral infection. High levels of cytoplasmic Ca(2+) may trigger membrane trafficking and transport of viral ER-associated proteins to viroplasms, sites of viral genome replication. This ionic imbalance induces the assembly of the inflammasome complex, which triggers the maturation of pro-IL-1beta into IL-1beta through the action of caspase-1. Targets also host mitochondria and induces mitochondrial depolarization. In addition of its role as a viroporin, acts as a lipid raft adhesion factor. Functionally, cysteine protease required for the proteolytic auto-cleavage between the non-structural proteins NS2 and NS3. The N-terminus of NS3 is required for the function of NS2 protease (active region NS2-3). Promotes the initiation of viral particle assembly by mediating the interaction between structural and non-structural proteins. Its function is as follows. Displays three enzymatic activities: serine protease with a chymotrypsin-like fold, NTPase and RNA helicase. NS3 serine protease, in association with NS4A, is responsible for the cleavages of NS3-NS4A, NS4A-NS4B, NS4B-NS5A and NS5A-NS5B. The NS3/NS4A complex prevents phosphorylation of host IRF3, thus preventing the establishment of dsRNA induced antiviral state. The NS3/NS4A complex induces host amino acid transporter component SLC3A2, thus contributing to HCV propagation. NS3 RNA helicase binds to RNA and unwinds both dsDNA and dsRNA in the 3' to 5' direction, and likely resolves RNA complicated stable secondary structures in the template strand. Binds a single ATP and catalyzes the unzipping of a single base pair of dsRNA. Inhibits host antiviral proteins TBK1 and IRF3 thereby preventing the establishment of an antiviral state. Cleaves host MAVS/CARDIF thereby preventing the establishment of an antiviral state. Cleaves host TICAM1/TRIF, thereby disrupting TLR3 signaling and preventing the establishment of an antiviral state. In terms of biological role, peptide cofactor which forms a non-covalent complex with the N-terminal of NS3 serine protease. The NS3/NS4A complex prevents phosphorylation of host IRF3, thus preventing the establishment of dsRNA induced antiviral state. The NS3/NS4A complex induces host amino acid transporter component SLC3A2, thus contributing to HCV propagation. Induces a specific membrane alteration that serves as a scaffold for the virus replication complex. This membrane alteration gives rise to the so-called ER-derived membranous web that contains the replication complex. NS4B self-interaction contributes to its function in membranous web formation. Promotes host TRIF protein degradation in a CASP8-dependent manner thereby inhibiting host TLR3-mediated interferon signaling. Disrupts the interaction between STING and TBK1 contributing to the inhibition of interferon signaling. Functionally, phosphorylated protein that is indispensable for viral replication and assembly. Both hypo- and hyperphosphorylated states are required for the viral life cycle. The hyperphosphorylated form of NS5A is an inhibitor of viral replication. Involved in RNA-binding and especially in binding to the viral genome. Zinc is essential for RNA-binding. Participates in the viral particle production as a result of its interaction with the mature viral core protein. Its interaction with host VAPB may target the viral replication complex to vesicles. Down-regulates viral IRES translation initiation. Mediates interferon resistance, presumably by interacting with and inhibiting host EIF2AK2/PKR. Prevents BIN1-induced apoptosis. Acts as a transcriptional activator of some host genes important for viral replication when localized in the nucleus. Via the interaction with host PACSIN2, modulates lipid droplet formation in order to promote virion assembly. Modulates TNFRSF21/DR6 signaling pathway for viral propagation. Its function is as follows. RNA-dependent RNA polymerase that performs primer-template recognition and RNA synthesis during viral replication. Initiates RNA transcription/replication at a flavin adenine dinucleotide (FAD), resulting in a 5'- FAD cap on viral RNAs. In this way, recognition of viral 5' RNA by host pattern recognition receptors can be bypassed, thereby evading activation of antiviral pathways. The polypeptide is Genome polyprotein (Homo sapiens (Human)).